The chain runs to 339 residues: 1-aminocyclopropane-1-carboxylate deaminase (339 aa).

An N6-(pyridoxal phosphate)lysine modification is found at Lys52. Catalysis depends on Ser79, which acts as the Nucleophile.

Belongs to the ACC deaminase/D-cysteine desulfhydrase family. Homotrimer. Pyridoxal 5'-phosphate is required as a cofactor.

The catalysed reaction is 1-aminocyclopropane-1-carboxylate + H2O = 2-oxobutanoate + NH4(+). In terms of biological role, catalyzes a cyclopropane ring-opening reaction, the irreversible conversion of 1-aminocyclopropane-1-carboxylate (ACC) to ammonia and alpha-ketobutyrate. Allows growth on ACC as a nitrogen source. The protein is 1-aminocyclopropane-1-carboxylate deaminase of Bradyrhizobium sp. (strain ORS 278).